A 420-amino-acid polypeptide reads, in one-letter code: Glucose-1-phosphate adenylyltransferase (420 aa).

Alpha-D-glucose 1-phosphate is bound by residues Tyr107, Gly172, 187 to 188, and Ser205; that span reads EK.

The protein belongs to the bacterial/plant glucose-1-phosphate adenylyltransferase family. Homotetramer.

It catalyses the reaction alpha-D-glucose 1-phosphate + ATP + H(+) = ADP-alpha-D-glucose + diphosphate. It participates in glycan biosynthesis; glycogen biosynthesis. In terms of biological role, involved in the biosynthesis of ADP-glucose, a building block required for the elongation reactions to produce glycogen. Catalyzes the reaction between ATP and alpha-D-glucose 1-phosphate (G1P) to produce pyrophosphate and ADP-Glc. The chain is Glucose-1-phosphate adenylyltransferase from Rhizobium johnstonii (strain DSM 114642 / LMG 32736 / 3841) (Rhizobium leguminosarum bv. viciae).